The primary structure comprises 401 residues: Argininosuccinate synthase (401 aa).

9 to 17 (AYSGGLDTS) provides a ligand contact to ATP. Residue Y88 coordinates L-citrulline. G118 contributes to the ATP binding site. Residues T120, N124, and D125 each contribute to the L-aspartate site. N124 contributes to the L-citrulline binding site. Residues R128, S177, S186, E262, and Y274 each coordinate L-citrulline.

The protein belongs to the argininosuccinate synthase family. Type 1 subfamily. Homotetramer.

Its subcellular location is the cytoplasm. The catalysed reaction is L-citrulline + L-aspartate + ATP = 2-(N(omega)-L-arginino)succinate + AMP + diphosphate + H(+). It functions in the pathway amino-acid biosynthesis; L-arginine biosynthesis; L-arginine from L-ornithine and carbamoyl phosphate: step 2/3. This chain is Argininosuccinate synthase, found in Chlorobaculum parvum (strain DSM 263 / NCIMB 8327) (Chlorobium vibrioforme subsp. thiosulfatophilum).